The sequence spans 90 residues: Probable Fe(2+)-trafficking protein (90 aa).

The protein belongs to the Fe(2+)-trafficking protein family.

Could be a mediator in iron transactions between iron acquisition and iron-requiring processes, such as synthesis and/or repair of Fe-S clusters in biosynthetic enzymes. This chain is Probable Fe(2+)-trafficking protein, found in Pseudomonas putida (strain W619).